The chain runs to 316 residues: Probable cell division protein WhiA (316 aa).

Residues 276–309 constitute a DNA-binding region (H-T-H motif); the sequence is SLEELGKIAEPQITKDAIAGRIRRLLQLAEKTEK.

The protein belongs to the WhiA family.

In terms of biological role, involved in cell division and chromosome segregation. In Bifidobacterium longum subsp. infantis (strain ATCC 15697 / DSM 20088 / JCM 1222 / NCTC 11817 / S12), this protein is Probable cell division protein WhiA.